The chain runs to 547 residues: ATP synthase subunit alpha (547 aa).

ATP is bound at residue 172–179; sequence GDRKTGKT.

Belongs to the ATPase alpha/beta chains family. In terms of assembly, F-type ATPases have 2 components, CF(1) - the catalytic core - and CF(0) - the membrane proton channel. CF(1) has five subunits: alpha(3), beta(3), gamma(1), delta(1), epsilon(1). CF(0) has three main subunits: a(1), b(2) and c(9-12). The alpha and beta chains form an alternating ring which encloses part of the gamma chain. CF(1) is attached to CF(0) by a central stalk formed by the gamma and epsilon chains, while a peripheral stalk is formed by the delta and b chains.

It localises to the cell membrane. It carries out the reaction ATP + H2O + 4 H(+)(in) = ADP + phosphate + 5 H(+)(out). In terms of biological role, produces ATP from ADP in the presence of a proton gradient across the membrane. The alpha chain is a regulatory subunit. This chain is ATP synthase subunit alpha, found in Corynebacterium glutamicum (strain R).